The following is a 350-amino-acid chain: Beta-ketodecanoyl-[acyl-carrier-protein] synthase (350 aa).

C133 is a catalytic residue.

Belongs to the thiolase-like superfamily. Beta-ketoacyl-ACP synthases family.

The enzyme catalyses octanoyl-CoA + malonyl-[ACP] + H(+) = 3-oxodecanoyl-[ACP] + CO2 + CoA. It participates in lipid metabolism; fatty acid biosynthesis. Its function is as follows. Catalyzes the condensation of octanoyl-CoA, obtained from exogenously supplied fatty acids via beta-oxidation, with malonyl-[acyl-carrier protein], forming 3-oxodecanoyl-[acyl-carrier protein], an intermediate of the fatty acid elongation cycle that can then be extended to supply all of the cellular fatty acid needs. The enzyme thereby shunts fatty acid degradation intermediates from the beta-oxidation pathway into de novo fatty acid biosynthesis. The polypeptide is Beta-ketodecanoyl-[acyl-carrier-protein] synthase (Pseudomonas aeruginosa (strain ATCC 15692 / DSM 22644 / CIP 104116 / JCM 14847 / LMG 12228 / 1C / PRS 101 / PAO1)).